Here is a 222-residue protein sequence, read N- to C-terminus: Potassium-transporting ATPase KdpC subunit (222 aa).

The chain crosses the membrane as a helical span at residues 13–35 (WAGLRSLLVLTVVTGVLYPLAVT). A disordered region spans residues 136-162 (TADHKVKPSDVPADAVTSSGSGLDPDI).

Belongs to the KdpC family. As to quaternary structure, the system is composed of three essential subunits: KdpA, KdpB and KdpC.

The protein resides in the cell membrane. Its function is as follows. Part of the high-affinity ATP-driven potassium transport (or Kdp) system, which catalyzes the hydrolysis of ATP coupled with the electrogenic transport of potassium into the cytoplasm. This subunit acts as a catalytic chaperone that increases the ATP-binding affinity of the ATP-hydrolyzing subunit KdpB by the formation of a transient KdpB/KdpC/ATP ternary complex. This chain is Potassium-transporting ATPase KdpC subunit, found in Streptomyces avermitilis (strain ATCC 31267 / DSM 46492 / JCM 5070 / NBRC 14893 / NCIMB 12804 / NRRL 8165 / MA-4680).